The following is a 220-amino-acid chain: MGRRPARCYRQIKNKPYPKSRYCRGVPDPKIRIYDVGMKKKGVDEFPFCVHLVSWEKENVSSEALEAARIACNKYMTKYAGKDAFHLRVRVHPFHVLRINKMLSCAGADRLQTGMRGAFGKPQGTCARVSIGQVLLSVRCKDGNSHHAQEALRRAKFKFPARQKIIVSRKWGFTKFNRTDYIKWKSQNRILPDGVNAKLLGCHGPLANRQPGKAFINACT.

It belongs to the universal ribosomal protein uL16 family. In terms of assembly, component of the small ribosomal subunit. Mature ribosomes consist of a small (40S) and a large (60S) subunit. The 40S subunit contains about 33 different proteins and 1 molecule of RNA (18S). The 60S subunit contains about 49 different proteins and 3 molecules of RNA (25S, 5.8S and 5S).

In Vitis riparia (Frost grape), this protein is Large ribosomal subunit protein uL16 (RPL10).